A 526-amino-acid polypeptide reads, in one-letter code: Bifunctional purine biosynthesis protein PurH (526 aa).

The MGS-like domain maps to 1 to 147; sequence MTKIERALIS…KNWAHVAIVT (147 aa).

Belongs to the PurH family.

The catalysed reaction is (6R)-10-formyltetrahydrofolate + 5-amino-1-(5-phospho-beta-D-ribosyl)imidazole-4-carboxamide = 5-formamido-1-(5-phospho-D-ribosyl)imidazole-4-carboxamide + (6S)-5,6,7,8-tetrahydrofolate. It carries out the reaction IMP + H2O = 5-formamido-1-(5-phospho-D-ribosyl)imidazole-4-carboxamide. Its pathway is purine metabolism; IMP biosynthesis via de novo pathway; 5-formamido-1-(5-phospho-D-ribosyl)imidazole-4-carboxamide from 5-amino-1-(5-phospho-D-ribosyl)imidazole-4-carboxamide (10-formyl THF route): step 1/1. It participates in purine metabolism; IMP biosynthesis via de novo pathway; IMP from 5-formamido-1-(5-phospho-D-ribosyl)imidazole-4-carboxamide: step 1/1. This Laribacter hongkongensis (strain HLHK9) protein is Bifunctional purine biosynthesis protein PurH.